The chain runs to 142 residues: UPF0102 protein Synpcc7942_0312 (142 aa).

It belongs to the UPF0102 family.

The polypeptide is UPF0102 protein Synpcc7942_0312 (Synechococcus elongatus (strain ATCC 33912 / PCC 7942 / FACHB-805) (Anacystis nidulans R2)).